Consider the following 305-residue polypeptide: N-acetylmuramic acid 6-phosphate etherase (305 aa).

The region spanning 61 to 224 (ISDALAKGGR…STGAMVKLGK (164 aa)) is the SIS domain. Glutamate 89 (proton donor) is an active-site residue. Residue glutamate 120 is part of the active site.

This sequence belongs to the GCKR-like family. MurNAc-6-P etherase subfamily. In terms of assembly, homodimer.

The catalysed reaction is N-acetyl-D-muramate 6-phosphate + H2O = N-acetyl-D-glucosamine 6-phosphate + (R)-lactate. The protein operates within amino-sugar metabolism; N-acetylmuramate degradation. Functionally, specifically catalyzes the cleavage of the D-lactyl ether substituent of MurNAc 6-phosphate, producing GlcNAc 6-phosphate and D-lactate. This is N-acetylmuramic acid 6-phosphate etherase from Synechocystis sp. (strain ATCC 27184 / PCC 6803 / Kazusa).